A 59-amino-acid chain; its full sequence is Large ribosomal subunit protein uL30 (59 aa).

The protein belongs to the universal ribosomal protein uL30 family. As to quaternary structure, part of the 50S ribosomal subunit.

The sequence is that of Large ribosomal subunit protein uL30 from Histophilus somni (strain 129Pt) (Haemophilus somnus).